The chain runs to 428 residues: Gamma-glutamyl phosphate reductase (428 aa).

This sequence belongs to the gamma-glutamyl phosphate reductase family.

The protein resides in the cytoplasm. The enzyme catalyses L-glutamate 5-semialdehyde + phosphate + NADP(+) = L-glutamyl 5-phosphate + NADPH + H(+). It functions in the pathway amino-acid biosynthesis; L-proline biosynthesis; L-glutamate 5-semialdehyde from L-glutamate: step 2/2. Its function is as follows. Catalyzes the NADPH-dependent reduction of L-glutamate 5-phosphate into L-glutamate 5-semialdehyde and phosphate. The product spontaneously undergoes cyclization to form 1-pyrroline-5-carboxylate. This chain is Gamma-glutamyl phosphate reductase, found in Hyphomonas neptunium (strain ATCC 15444).